Reading from the N-terminus, the 561-residue chain is Liver carboxylesterase B-1 (561 aa).

Residues 1 to 18 form the signal peptide; it reads MCLRSLFLVSLATCVVCG. An N-linked (GlcNAc...) asparagine glycan is attached at N79. C87 and C116 are oxidised to a cystine. The Acyl-ester intermediate role is filled by S221. Cysteines 273 and 284 form a disulfide. Catalysis depends on charge relay system residues E353 and H466. A Prevents secretion from ER motif is present at residues 558–561; it reads HNEL.

It belongs to the type-B carboxylesterase/lipase family. In terms of assembly, monomer.

The protein localises to the endoplasmic reticulum lumen. The enzyme catalyses a carboxylic ester + H2O = an alcohol + a carboxylate + H(+). Involved in the detoxification of xenobiotics and in the activation of ester and amide prodrugs. This chain is Liver carboxylesterase B-1, found in Rattus norvegicus (Rat).